The primary structure comprises 242 residues: 1-(5-phosphoribosyl)-5-[(5-phosphoribosylamino)methylideneamino] imidazole-4-carboxamide isomerase (242 aa).

The active-site Proton acceptor is the Asp8. Asp129 acts as the Proton donor in catalysis.

This sequence belongs to the HisA/HisF family.

It is found in the cytoplasm. The catalysed reaction is 1-(5-phospho-beta-D-ribosyl)-5-[(5-phospho-beta-D-ribosylamino)methylideneamino]imidazole-4-carboxamide = 5-[(5-phospho-1-deoxy-D-ribulos-1-ylimino)methylamino]-1-(5-phospho-beta-D-ribosyl)imidazole-4-carboxamide. Its pathway is amino-acid biosynthesis; L-histidine biosynthesis; L-histidine from 5-phospho-alpha-D-ribose 1-diphosphate: step 4/9. This Clostridium botulinum (strain ATCC 19397 / Type A) protein is 1-(5-phosphoribosyl)-5-[(5-phosphoribosylamino)methylideneamino] imidazole-4-carboxamide isomerase.